The following is a 356-amino-acid chain: uncharacterized protein (356 aa).

NADP(+) is bound at residue 37-44 (TGASSGIG). Serine 168 contacts substrate. The active-site Proton acceptor is the tyrosine 181.

Belongs to the short-chain dehydrogenases/reductases (SDR) family.

This is an uncharacterized protein from Bacillus subtilis (strain 168).